The following is a 223-amino-acid chain: uncharacterized protein (223 aa).

Transmembrane regions (helical) follow at residues 1–21 and 45–65; these read MLII…TFYL and ILIG…TSLI.

Its subcellular location is the cell membrane. This is an uncharacterized protein from Haemophilus influenzae (strain ATCC 51907 / DSM 11121 / KW20 / Rd).